We begin with the raw amino-acid sequence, 72 residues long: Prokaryotic ubiquitin-like protein Pup (72 aa).

The segment covering 1 to 10 has biased composition (gly residues); the sequence is MATKDTGGGQ. A disordered region spans residues 1 to 45; that stretch reads MATKDTGGGQQKATRSTEEVEEQAQDAQASEDLKERQEKLSDDVD. The stretch at 10–60 forms a coiled coil; sequence QQKATRSTEEVEEQAQDAQASEDLKERQEKLSDDVDSVLDEIDDVLEENAE. An ARC ATPase binding region spans residues 28–66; the sequence is QASEDLKERQEKLSDDVDSVLDEIDDVLEENAEDFVRSF. Basic and acidic residues predominate over residues 31-42; sequence EDLKERQEKLSD. Glutamate 72 is covalently cross-linked (Isoglutamyl lysine isopeptide (Glu-Lys) (interchain with K-? in acceptor proteins)).

The protein belongs to the prokaryotic ubiquitin-like protein family. In terms of assembly, strongly interacts with the proteasome-associated ATPase ARC through a hydrophobic interface; the interacting region of Pup lies in its C-terminal half. There is one Pup binding site per ARC hexamer ring.

It participates in protein degradation; proteasomal Pup-dependent pathway. Its function is as follows. Protein modifier that is covalently attached to lysine residues of substrate proteins, thereby targeting them for proteasomal degradation. The tagging system is termed pupylation. The chain is Prokaryotic ubiquitin-like protein Pup from Streptomyces coelicolor (strain ATCC BAA-471 / A3(2) / M145).